An 884-amino-acid chain; its full sequence is DNA mismatch repair protein MutS (884 aa).

Residue 643-650 coordinates ATP; the sequence is GPNMGGKS.

This sequence belongs to the DNA mismatch repair MutS family.

Functionally, this protein is involved in the repair of mismatches in DNA. It is possible that it carries out the mismatch recognition step. This protein has a weak ATPase activity. The sequence is that of DNA mismatch repair protein MutS from Methylobacillus flagellatus (strain ATCC 51484 / DSM 6875 / VKM B-1610 / KT).